Reading from the N-terminus, the 179-residue chain is Inosine/xanthosine triphosphatase (179 aa).

8 to 13 contributes to the substrate binding site; sequence TTNPAK. Positions 38 and 68 each coordinate Mg(2+). Position 68–69 (68–69) interacts with substrate; sequence EA.

The protein belongs to the YjjX NTPase family. In terms of assembly, homodimer. It depends on Mg(2+) as a cofactor. Mn(2+) serves as cofactor.

It catalyses the reaction XTP + H2O = XDP + phosphate + H(+). The enzyme catalyses ITP + H2O = IDP + phosphate + H(+). Its function is as follows. Phosphatase that hydrolyzes non-canonical purine nucleotides such as XTP and ITP to their respective diphosphate derivatives. Probably excludes non-canonical purines from DNA/RNA precursor pool, thus preventing their incorporation into DNA/RNA and avoiding chromosomal lesions. The polypeptide is Inosine/xanthosine triphosphatase (Pectobacterium carotovorum subsp. carotovorum (strain PC1)).